Reading from the N-terminus, the 204-residue chain is Translation initiation factor 2 subunit beta (204 aa).

A TRAM domain is found at 146 to 204; sequence NLEEGQVLDVEIQSLSKRGDGVVKMGRYIMYVSNAKPGQSVKIKISRISGSIVFTERAE.

It belongs to the eIF-2-beta/eIF-5 family. Heterotrimer composed of an alpha, a beta and a gamma chain.

EIF-2 functions in the early steps of protein synthesis by forming a ternary complex with GTP and initiator tRNA. In Methanoregula boonei (strain DSM 21154 / JCM 14090 / 6A8), this protein is Translation initiation factor 2 subunit beta.